Reading from the N-terminus, the 465-residue chain is Cysteine--tRNA ligase (465 aa).

Residue Cys-27 coordinates Zn(2+). Residues 29–39 (PTVYDDAHLGH) carry the 'HIGH' region motif. Positions 207, 237, and 241 each coordinate Zn(2+). Residues 269 to 273 (KMSKS) carry the 'KMSKS' region motif. Position 272 (Lys-272) interacts with ATP.

The protein belongs to the class-I aminoacyl-tRNA synthetase family. Monomer. It depends on Zn(2+) as a cofactor.

Its subcellular location is the cytoplasm. The enzyme catalyses tRNA(Cys) + L-cysteine + ATP = L-cysteinyl-tRNA(Cys) + AMP + diphosphate. In Helicobacter pylori (strain J99 / ATCC 700824) (Campylobacter pylori J99), this protein is Cysteine--tRNA ligase (cysS).